The sequence spans 574 residues: K(+)/H(+) antiporter NhaP2 (574 aa).

13 consecutive transmembrane segments (helical) span residues 6 to 26 (INSF…LSPM), 34 to 54 (ILLI…GGIL), 58 to 78 (YSTA…DGGM), 87 to 107 (VALW…TSIT), 109 to 129 (VMAA…GAIV), 173 to 193 (IAIL…ISFI), 196 to 216 (FGLG…LVNV), 219 to 239 (LAEG…YATS), 242 to 262 (LGGS…NKPT), 271 to 291 (VLDG…GLLL), 299 to 319 (IWLP…PLAV), 335 to 355 (WFIS…VFPM), and 359 to 379 (LPGA…SLLV). In terms of domain architecture, RCK C-terminal spans 405 to 486 (SGVEIYPKSE…LEALSNLFSQ (82 aa)).

It belongs to the monovalent cation:proton antiporter 1 (CPA1) transporter (TC 2.A.36) family. NhaP2 subfamily.

It localises to the cell inner membrane. It catalyses the reaction K(+)(in) + H(+)(out) = K(+)(out) + H(+)(in). Its function is as follows. K(+)/H(+) antiporter that extrudes potassium in exchange for external protons and maintains the internal concentration of potassium under toxic levels. The sequence is that of K(+)/H(+) antiporter NhaP2 from Shewanella oneidensis (strain ATCC 700550 / JCM 31522 / CIP 106686 / LMG 19005 / NCIMB 14063 / MR-1).